The following is a 130-amino-acid chain: Classical arabinogalactan protein 7 (130 aa).

Positions 1–21 (MNSKIIEAFFIVALFTTSCLA) are cleaved as a signal peptide. Pyrrolidone carboxylic acid is present on Gln-22. The disordered stretch occupies residues 22–108 (QAPAPSPTTT…DASAPPPNAA (87 aa)). A 4-hydroxyproline mark is found at Pro-24, Pro-26, Pro-28, Pro-35, and Pro-36. Residues Pro-24, Pro-26, Pro-28, Pro-35, and Pro-36 are each glycosylated (O-linked (Ara...) hydroxyproline). Positions 33 to 68 (TPPPVATPPPAATPAPTTTPPPAVSPAPTSSPPSSA) are enriched in pro residues. A lipid anchor (GPI-anchor amidated asparagine) is attached at Asn-106. The propeptide at 107-130 (AALTNKAFVVGSLVAAIIYAVVLA) is removed in mature form.

Belongs to the classical AGP family. In terms of processing, O-glycosylated on hydroxyprolines; noncontiguous hydroxylproline residues are glycosylated with arabinogalactan.

The protein localises to the cell membrane. Functionally, proteoglycan that seems to be implicated in diverse developmental roles such as differentiation, cell-cell recognition, embryogenesis and programmed cell death. In Arabidopsis thaliana (Mouse-ear cress), this protein is Classical arabinogalactan protein 7 (AGP7).